A 761-amino-acid polypeptide reads, in one-letter code: BMP/retinoic acid-inducible neural-specific protein 1 (761 aa).

An N-terminal signal peptide occupies residues 1–22; the sequence is MNWRLVEFLYLLFIWDHILVQP. In terms of domain architecture, MACPF spans 68-251; it reads RYKIYREFAR…FVQSALSYIM (184 aa). Asn156, Asn433, Asn443, Asn553, Asn599, Asn631, and Asn677 each carry an N-linked (GlcNAc...) asparagine glycan.

Belongs to the BRINP family.

It localises to the cytoplasm. Functionally, plays a role in neurogenesis and brain development. May suppress cell cycle progression in postmitotic neurons by inhibiting G1/S transition. This Gallus gallus (Chicken) protein is BMP/retinoic acid-inducible neural-specific protein 1 (BRINP1).